Here is a 480-residue protein sequence, read N- to C-terminus: Type II methyltransferase M.NspV (480 aa).

This sequence belongs to the methyltransferase superfamily.

In terms of biological role, a gamma subtype methylase that recognizes the double-stranded sequence 5'-TTCGAA-3', and methylates it on an unknown base to protect it against the NspV endonuclease. The sequence is that of Type II methyltransferase M.NspV from Nostoc sp. (strain ATCC 29411 / PCC 7524).